We begin with the raw amino-acid sequence, 227 residues long: Cytochrome c oxidase subunit 2 (227 aa).

Residues 1 to 14 (MAYPFQLGLQDATS) are Mitochondrial intermembrane-facing. Residues 15-45 (PIMEELLHFHDHTLMIVFLISSLVLYIISLM) form a helical membrane-spanning segment. Residues 46–59 (LTTKLTHTSTMDAQ) lie on the Mitochondrial matrix side of the membrane. The chain crosses the membrane as a helical span at residues 60 to 87 (EVETVWTILPAIILVLIALPSLRILYMM). The Mitochondrial intermembrane segment spans residues 88 to 227 (DEINNPSLTV…YFETWSALMV (140 aa)). Residues H161, C196, E198, C200, H204, and M207 each contribute to the Cu cation site. E198 provides a ligand contact to Mg(2+). At Y218 the chain carries Phosphotyrosine.

This sequence belongs to the cytochrome c oxidase subunit 2 family. In terms of assembly, component of the cytochrome c oxidase (complex IV, CIV), a multisubunit enzyme composed of 14 subunits. The complex is composed of a catalytic core of 3 subunits MT-CO1, MT-CO2 and MT-CO3, encoded in the mitochondrial DNA, and 11 supernumerary subunits COX4I, COX5A, COX5B, COX6A, COX6B, COX6C, COX7A, COX7B, COX7C, COX8 and NDUFA4, which are encoded in the nuclear genome. The complex exists as a monomer or a dimer and forms supercomplexes (SCs) in the inner mitochondrial membrane with NADH-ubiquinone oxidoreductase (complex I, CI) and ubiquinol-cytochrome c oxidoreductase (cytochrome b-c1 complex, complex III, CIII), resulting in different assemblies (supercomplex SCI(1)III(2)IV(1) and megacomplex MCI(2)III(2)IV(2)). Found in a complex with TMEM177, COA6, COX18, COX20, SCO1 and SCO2. Interacts with TMEM177 in a COX20-dependent manner. Interacts with COX20. Interacts with COX16. The cofactor is Cu cation.

Its subcellular location is the mitochondrion inner membrane. It carries out the reaction 4 Fe(II)-[cytochrome c] + O2 + 8 H(+)(in) = 4 Fe(III)-[cytochrome c] + 2 H2O + 4 H(+)(out). Functionally, component of the cytochrome c oxidase, the last enzyme in the mitochondrial electron transport chain which drives oxidative phosphorylation. The respiratory chain contains 3 multisubunit complexes succinate dehydrogenase (complex II, CII), ubiquinol-cytochrome c oxidoreductase (cytochrome b-c1 complex, complex III, CIII) and cytochrome c oxidase (complex IV, CIV), that cooperate to transfer electrons derived from NADH and succinate to molecular oxygen, creating an electrochemical gradient over the inner membrane that drives transmembrane transport and the ATP synthase. Cytochrome c oxidase is the component of the respiratory chain that catalyzes the reduction of oxygen to water. Electrons originating from reduced cytochrome c in the intermembrane space (IMS) are transferred via the dinuclear copper A center (CU(A)) of subunit 2 and heme A of subunit 1 to the active site in subunit 1, a binuclear center (BNC) formed by heme A3 and copper B (CU(B)). The BNC reduces molecular oxygen to 2 water molecules using 4 electrons from cytochrome c in the IMS and 4 protons from the mitochondrial matrix. The sequence is that of Cytochrome c oxidase subunit 2 (MT-CO2) from Cerdocyon thous (Crab-eating fox).